A 260-amino-acid chain; its full sequence is GDSL esterase/lipase WDL1 (260 aa).

The first 35 residues, Met1–Ala35, serve as a signal peptide directing secretion. The Nucleophile role is filled by Ser18. 2 N-linked (GlcNAc...) asparagine glycosylation sites follow: Asn83 and Asn150. Catalysis depends on residues Asp191 and His194.

Belongs to the 'GDSL' lipolytic enzyme family. As to expression, highly expressed in panicles. Expressed in shoots, mature flowers and seeds.

The protein localises to the endoplasmic reticulum. Involved in the organization of leaf cuticle and wax crystals. This chain is GDSL esterase/lipase WDL1, found in Oryza sativa subsp. japonica (Rice).